We begin with the raw amino-acid sequence, 183 residues long: Proton-transporting V-type ATPase complex assembly regulator TMEM9 (183 aa).

Positions 1 to 20 (MKLLSLVAVVGCLLVPPAEA) are cleaved as a signal peptide. Residues asparagine 21, asparagine 38, and asparagine 47 are each glycosylated (N-linked (GlcNAc...) asparagine). At 21-89 (NKSSEDIRCK…YEERSTTTIK (69 aa)) the chain is on the extracellular side. A helical membrane pass occupies residues 90 to 110 (VIIVIYLSVVGALLLYMAFLM). The Cytoplasmic portion of the chain corresponds to 111-183 (LVDPLIRKPD…TVFDRHKMLS (73 aa)). Phosphoserine is present on residues serine 137 and serine 144.

Belongs to the TMEM9 family. As to quaternary structure, interacts with the v-ATPase accessory protein ATP6AP2 and with the v-ATPase complex subunit ATP6V0D1; these interactions lead to the assembly of the v-ATPase complex. In terms of processing, N-glycosylated. Highly expressed in adrenal gland, thyroid gland, testis, ovary and prostate. Moderate expression in trachea, spinal cord, stomach, colon, small intestine and spleen. Low expression in bone marrow, lymph node, thymus and peripheral blood lymphocytes. Expression is detected in hematopoietic cell lines including those of myeloid, erythroid, B- and T-cell origin.

It is found in the lysosome membrane. Its subcellular location is the late endosome membrane. The protein resides in the endosome. The protein localises to the multivesicular body membrane. Its function is as follows. Transmembrane protein that binds to and facilitates the assembly of lysosomal proton-transporting V-type ATPase (v-ATPase), resulting in enhanced lysosomal acidification and trafficking. By bringing the v-ATPase accessory protein ATP6AP2 and the v-ATPase subunit ATP6V0D1 together, allows v-ATPase complex formation and activation. TMEM9-controlled vesicular acidification induces hyperactivation of Wnt/beta-catenin signaling, involved in development, tissue homeostasis and tissue regeneration, through lysosomal degradation of adenomatous polyposis coli/APC. In the liver, involved in hepatic regeneration. This chain is Proton-transporting V-type ATPase complex assembly regulator TMEM9, found in Homo sapiens (Human).